The chain runs to 445 residues: Argininosuccinate synthase (445 aa).

ATP-binding positions include 17–25 (AFSGGLDTS) and Ala-43. Tyr-99 contacts L-citrulline. ATP contacts are provided by Gly-129 and Thr-131. 3 residues coordinate L-aspartate: Thr-131, Asn-135, and Asp-136. Asn-135 contacts L-citrulline. Position 136 (Asp-136) interacts with ATP. L-citrulline is bound by residues Arg-139 and Ser-192. Asp-194 is a binding site for ATP. Residues Thr-201, Glu-203, and Glu-280 each coordinate L-citrulline.

Belongs to the argininosuccinate synthase family. Type 2 subfamily. Homotetramer.

It localises to the cytoplasm. The enzyme catalyses L-citrulline + L-aspartate + ATP = 2-(N(omega)-L-arginino)succinate + AMP + diphosphate + H(+). It functions in the pathway amino-acid biosynthesis; L-arginine biosynthesis; L-arginine from L-ornithine and carbamoyl phosphate: step 2/3. The protein is Argininosuccinate synthase of Herminiimonas arsenicoxydans.